A 712-amino-acid polypeptide reads, in one-letter code: Eukaryotic translation initiation factor 3 subunit B (712 aa).

Residues 1-98 (MSLTEAEYHE…LFVQFETSEM (98 aa)) are sufficient for interaction with HCR1 and TIF32. The interval 1–224 (MSLTEAEYHE…GVQSWGGADF (224 aa)) is sufficient for interaction with PIC8. Residues 37 to 124 (NYVVVDGAPI…HRLLVNRLSD (88 aa)) form the RRM domain. WD repeat units follow at residues 191 to 229 (RKFFTSKYAKFSPKGTYLFSIHPQGVQSWGGADFSSIDK), 230 to 293 (FMHN…RTFA), 301 to 339 (QKEMPWPLVKWSHDDKYCARQGPGALAVYETPSFQLLDK), 342 to 384 (IKID…QTAR), 452 to 493 (ELKE…DFYA), 513 to 555 (ITDK…SNKN), and 566 to 604 (DKFSGMTNISWDPSGRFVATWSSSWLHTIENGYKLYEFT).

Belongs to the eIF-3 subunit B family. Component of the eukaryotic translation initiation factor 3 (eIF-3) complex.

It is found in the cytoplasm. Functionally, RNA-binding component of the eukaryotic translation initiation factor 3 (eIF-3) complex, which is involved in protein synthesis of a specialized repertoire of mRNAs and, together with other initiation factors, stimulates binding of mRNA and methionyl-tRNAi to the 40S ribosome. The eIF-3 complex specifically targets and initiates translation of a subset of mRNAs involved in cell proliferation. The chain is Eukaryotic translation initiation factor 3 subunit B from Scheffersomyces stipitis (strain ATCC 58785 / CBS 6054 / NBRC 10063 / NRRL Y-11545) (Yeast).